A 117-amino-acid polypeptide reads, in one-letter code: MARVKGAVRTRARHKKILKLAKGYFGAKSKLFRMANQAVMKSLNYAYNDRRAKKRDFRKLWIARINAAARINGLTYSRFISGLRKSGIELNRKVLADLAVNDAAAFAQLAETAKAAK.

It belongs to the bacterial ribosomal protein bL20 family.

Its function is as follows. Binds directly to 23S ribosomal RNA and is necessary for the in vitro assembly process of the 50S ribosomal subunit. It is not involved in the protein synthesizing functions of that subunit. In Ruminiclostridium cellulolyticum (strain ATCC 35319 / DSM 5812 / JCM 6584 / H10) (Clostridium cellulolyticum), this protein is Large ribosomal subunit protein bL20.